A 344-amino-acid polypeptide reads, in one-letter code: Succinylglutamate desuccinylase (344 aa).

Zn(2+) is bound by residues His63, Glu66, and His160. The active site involves Glu224.

The protein belongs to the AspA/AstE family. Succinylglutamate desuccinylase subfamily. Zn(2+) serves as cofactor.

The enzyme catalyses N-succinyl-L-glutamate + H2O = L-glutamate + succinate. The protein operates within amino-acid degradation; L-arginine degradation via AST pathway; L-glutamate and succinate from L-arginine: step 5/5. In terms of biological role, transforms N(2)-succinylglutamate into succinate and glutamate. This is Succinylglutamate desuccinylase from Shewanella sp. (strain MR-4).